Consider the following 338-residue polypeptide: Glycerol-3-phosphate dehydrogenase [NAD(P)+] (338 aa).

NADPH contacts are provided by Ser-13, Trp-14, and Lys-108. 3 residues coordinate sn-glycerol 3-phosphate: Lys-108, Gly-139, and Ser-141. An NADPH-binding site is contributed by Ala-143. Positions 194, 247, 257, 258, and 259 each coordinate sn-glycerol 3-phosphate. Lys-194 (proton acceptor) is an active-site residue. Arg-258 provides a ligand contact to NADPH. NADPH contacts are provided by Val-282 and Glu-284.

This sequence belongs to the NAD-dependent glycerol-3-phosphate dehydrogenase family.

The protein localises to the cytoplasm. The enzyme catalyses sn-glycerol 3-phosphate + NAD(+) = dihydroxyacetone phosphate + NADH + H(+). It catalyses the reaction sn-glycerol 3-phosphate + NADP(+) = dihydroxyacetone phosphate + NADPH + H(+). Its pathway is membrane lipid metabolism; glycerophospholipid metabolism. In terms of biological role, catalyzes the reduction of the glycolytic intermediate dihydroxyacetone phosphate (DHAP) to sn-glycerol 3-phosphate (G3P), the key precursor for phospholipid synthesis. The protein is Glycerol-3-phosphate dehydrogenase [NAD(P)+] of Streptococcus agalactiae serotype III (strain NEM316).